Here is a 243-residue protein sequence, read N- to C-terminus: Carboxy-S-adenosyl-L-methionine synthase (243 aa).

S-adenosyl-L-methionine is bound by residues tyrosine 40, 65-67 (GCS), 90-91 (DN), 118-119 (DI), asparagine 133, and arginine 200.

Belongs to the class I-like SAM-binding methyltransferase superfamily. Cx-SAM synthase family. As to quaternary structure, homodimer.

The enzyme catalyses prephenate + S-adenosyl-L-methionine = carboxy-S-adenosyl-L-methionine + 3-phenylpyruvate + H2O. In terms of biological role, catalyzes the conversion of S-adenosyl-L-methionine (SAM) to carboxy-S-adenosyl-L-methionine (Cx-SAM). This chain is Carboxy-S-adenosyl-L-methionine synthase, found in Shewanella piezotolerans (strain WP3 / JCM 13877).